The sequence spans 188 residues: Archaetidylinositol phosphate synthase (188 aa).

Transmembrane regions (helical) follow at residues 20 to 40 (LASL…ITLL) and 51 to 71 (ILAG…GALA). Mg(2+) contacts are provided by Asp64, Asp67, Asp85, and Asp89. The Proton acceptor role is filled by Asp89. Helical transmembrane passes span 96–116 (ILFG…LTLI) and 147–167 (IIII…YLVA).

The protein belongs to the CDP-alcohol phosphatidyltransferase class-I family. Requires Mn(2+) as cofactor. Mg(2+) is required as a cofactor.

The protein resides in the cell membrane. It catalyses the reaction CDP-2,3-bis-O-(phytanyl)-sn-glycerol + 1D-myo-inositol 3-phosphate = saturated 1-archaetidyl-1D-myo-inositol 3-phosphate + CMP + H(+). Its pathway is lipid metabolism; phospholipid metabolism. Catalyzes the formation of archaetidylinositol phosphate (AIP) from CDP-archaeol (CDP-ArOH or CDP-2,3-bis-(O-phytanyl)-sn-glycerol) and 1L-myo-inositol 1-phosphate (IP or 1D-myo-inositol 3-phosphate). AIP is a precursor of archaetidyl-myo-inositol (AI), an ether-type inositol phospholipid ubiquitously distributed in archaea membranes and essential for glycolipid biosynthesis in archaea. This is Archaetidylinositol phosphate synthase from Pyrococcus horikoshii (strain ATCC 700860 / DSM 12428 / JCM 9974 / NBRC 100139 / OT-3).